The following is a 309-amino-acid chain: Formimidoylglutamase (309 aa).

The Mn(2+) site is built by His-128, Asp-153, His-155, Asp-157, Cys-240, and Asp-242.

It belongs to the arginase family. Mn(2+) serves as cofactor.

It carries out the reaction N-formimidoyl-L-glutamate + H2O = formamide + L-glutamate. Its pathway is amino-acid degradation; L-histidine degradation into L-glutamate; L-glutamate from N-formimidoyl-L-glutamate (hydrolase route): step 1/1. Catalyzes the conversion of N-formimidoyl-L-glutamate to L-glutamate and formamide. The polypeptide is Formimidoylglutamase (Staphylococcus carnosus (strain TM300)).